We begin with the raw amino-acid sequence, 166 residues long: uncharacterized protein (166 aa).

This is an uncharacterized protein from Xestia (XnGV).